A 198-amino-acid chain; its full sequence is Recombination protein RecR (198 aa).

A C4-type zinc finger spans residues 58 to 73; the sequence is CSVCGNFTDKDPCAIC. The 95-residue stretch at 81-175 folds into the Toprim domain; sequence NTICVVEHPK…KVTRIAHGIP (95 aa).

The protein belongs to the RecR family.

Functionally, may play a role in DNA repair. It seems to be involved in an RecBC-independent recombinational process of DNA repair. It may act with RecF and RecO. The chain is Recombination protein RecR from Clostridium tetani (strain Massachusetts / E88).